The chain runs to 312 residues: Protein lon-1 (312 aa).

The signal sequence occupies residues 1–18; that stretch reads MNYLLTALIALLAPISVA. The 123-residue stretch at 87-209 folds into the SCP domain; it reads EHNRYRRMVP…GHRNVFVCHY (123 aa). The N-linked (GlcNAc...) asparagine glycan is linked to Asn142. Residues 265–284 show a composition bias toward low complexity; the sequence is TTTTESTTTSTTTEEPTTTC. The interval 265 to 312 is disordered; that stretch reads TTTTESTTTSTTTEEPTTTCEPDEPEAEGADNNQEEEEENNDGFRMRV. Positions 285–305 are enriched in acidic residues; it reads EPDEPEAEGADNNQEEEEENN.

This sequence belongs to the CRISP family. Expressed in hypodermal tissues.

In terms of biological role, regulates body size morphogenesis, but does not affect male tail development. The sequence is that of Protein lon-1 (lon-1) from Caenorhabditis elegans.